Consider the following 453-residue polypeptide: tRNA modification GTPase MnmE (453 aa).

Residues Arg-22, Glu-79, and Lys-119 each coordinate (6S)-5-formyl-5,6,7,8-tetrahydrofolate. Residues 215-376 (GMKVVIAGRP…LKQHLKSLMG (162 aa)) form the TrmE-type G domain. Asn-225 serves as a coordination point for K(+). GTP-binding positions include 225–230 (NAGKSS), 244–250 (TEIAGTT), 269–272 (DTAG), and 334–337 (NKAD). Ser-229 is a Mg(2+) binding site. Thr-244, Ile-246, and Thr-249 together coordinate K(+). Thr-250 contributes to the Mg(2+) binding site. (6S)-5-formyl-5,6,7,8-tetrahydrofolate is bound at residue Lys-453.

It belongs to the TRAFAC class TrmE-Era-EngA-EngB-Septin-like GTPase superfamily. TrmE GTPase family. Homodimer. Heterotetramer of two MnmE and two MnmG subunits. K(+) serves as cofactor.

Its subcellular location is the cytoplasm. Exhibits a very high intrinsic GTPase hydrolysis rate. Involved in the addition of a carboxymethylaminomethyl (cmnm) group at the wobble position (U34) of certain tRNAs, forming tRNA-cmnm(5)s(2)U34. The polypeptide is tRNA modification GTPase MnmE (Shewanella halifaxensis (strain HAW-EB4)).